The primary structure comprises 49 residues: Large ribosomal subunit protein bL33 (49 aa).

This sequence belongs to the bacterial ribosomal protein bL33 family.

This Clostridium botulinum (strain Alaska E43 / Type E3) protein is Large ribosomal subunit protein bL33.